The chain runs to 488 residues: Cytochrome P450 71A24 (488 aa).

Residues 3 to 23 form a helical membrane-spanning segment; that stretch reads MMMMIILLLCSIILITILFFK. Position 433 (cysteine 433) interacts with heme.

The protein belongs to the cytochrome P450 family. Requires heme as cofactor.

Its subcellular location is the membrane. This Arabidopsis thaliana (Mouse-ear cress) protein is Cytochrome P450 71A24 (CYP71A24).